The sequence spans 301 residues: Cardiolipin synthase (CMP-forming) (301 aa).

Residues 70 to 93 (SGAGKAAPRPAAGAGAAAEAPGGQ) are disordered. The segment covering 71 to 93 (GAGKAAPRPAAGAGAAAEAPGGQ) has biased composition (low complexity). Transmembrane regions (helical) follow at residues 109-129 (IPNMLSMTRIGLAPVLGYLII), 133-153 (FNIALGVFALAGLTDLLDGFI), 190-212 (IPVPLTYMIISRDVMLIAAVFYV), 250-270 (LILVAASLAAPVFNYADSIYL), and 272-292 (ILWCFTAFTTAASAYSYYHYG).

The protein belongs to the CDP-alcohol phosphatidyltransferase class-I family. Requires a divalent metal cation as cofactor. Highly expressed in tissues such as heart, skeletal muscle and liver.

It is found in the mitochondrion inner membrane. It catalyses the reaction a CDP-1,2-diacyl-sn-glycerol + a 1,2-diacyl-sn-glycero-3-phospho-(1'-sn-glycerol) = a cardiolipin + CMP + H(+). Functionally, catalyzes the synthesis of cardiolipin (CL) (diphosphatidylglycerol) by specifically transferring a phosphatidyl group from CDP-diacylglycerol to phosphatidylglycerol (PG). CL is a key phospholipid in mitochondrial membranes and plays important roles in maintaining the functional integrity and dynamics of mitochondria under both optimal and stress conditions. This is Cardiolipin synthase (CMP-forming) (CRLS1) from Homo sapiens (Human).